The chain runs to 108 residues: UPF0060 membrane protein Sca_1835 (108 aa).

Transmembrane regions (helical) follow at residues 5–25, 34–54, 60–80, and 84–104; these read ILIF…IWLW, FGLL…FQVF, VYAA…YVFD, and PDKY…IMLL.

The protein belongs to the UPF0060 family.

It localises to the cell membrane. The polypeptide is UPF0060 membrane protein Sca_1835 (Staphylococcus carnosus (strain TM300)).